We begin with the raw amino-acid sequence, 486 residues long: Transcription enhancer factor-like protein egl-44 (486 aa).

A compositionally biased stretch (low complexity) spans G47 to G57. The disordered stretch occupies residues G47–L87. The TEA DNA-binding region spans S88 to D164. A disordered region spans residues E165–S188.

In terms of assembly, interacts (via N-terminus) with egl-46 (via C-terminus); the interaction is direct; the interaction may regulate transcription. Interacts with yap-1 (via WW domain); the interaction may regulate transcription. As to expression, expressed in HSN neurons in embryos and in the FLP neurons from the L1 stage through to adults. Not expressed in touch cells. Also expressed in larval hypodermis, intestine, pharyngeal muscle and other neurons. In adults expression is lost from some neurons, is weaker in the hypodermis but remains in the intestine. Expressed in HOB neuron, ray neurons RnA and RnB, and the ray structural cell, Rnst; rays are male-specific genital sensilla (simple sense organs).

It is found in the nucleus. Functionally, transcription factor. Binds to DNA sequence motif 5'-CATNNNNAAATGCAT-3' as a heterodimer with egl-46. Represses expression of genes involved in differentiation of touch receptor neurons (TRN), probably acting as a heterodimer with egl-46, perhaps by occupying similar cis-regulatory elements as an unc-86/mec-3 heterodimer. Plays a role in cell fate specification of neurons, including the hook neuron HOB, and touch receptor neurons. Involved in male mating behavior, acting in concert with egl-46, via modulation of expression of polycystins lov-1 and pkd-2, homeodomain protein ceh-26, and neuropeptide-like protein nlp-8. Acts upstream of egl-46 to prevent touch cell differentiation in FLP neurons. Plays a role in neuron differentiation by repressing the expression of zag-1 in FLP neurons, probably acting as a heterodimer with egl-46; because zag-1 represses expression of egl-46 and egl-44, together these proteins form a bistable, negative-feedback loop that regulates the choice between neuronal fates. Also promotes HSN neuron development. In association with egl-46, regulates cell cycle exit in the neuronal Q cell lineage. Plays a role in specifying commissural dendrites of the PVD nociceptive neurons, acting in concert with egl-46. May be involved in thermal stress response downstream of yap-1. This is Transcription enhancer factor-like protein egl-44 (egl-44) from Caenorhabditis elegans.